Reading from the N-terminus, the 131-residue chain is D-ribose pyranase (131 aa).

The active-site Proton donor is the His20. Substrate is bound by residues Asp28, His98, and Tyr120–Asn122.

Belongs to the RbsD / FucU family. RbsD subfamily. Homodecamer.

The protein resides in the cytoplasm. The catalysed reaction is beta-D-ribopyranose = beta-D-ribofuranose. The protein operates within carbohydrate metabolism; D-ribose degradation; D-ribose 5-phosphate from beta-D-ribopyranose: step 1/2. Its function is as follows. Catalyzes the interconversion of beta-pyran and beta-furan forms of D-ribose. The sequence is that of D-ribose pyranase from Lactobacillus gasseri (strain ATCC 33323 / DSM 20243 / BCRC 14619 / CIP 102991 / JCM 1131 / KCTC 3163 / NCIMB 11718 / NCTC 13722 / AM63).